A 310-amino-acid polypeptide reads, in one-letter code: tRNA dimethylallyltransferase (310 aa).

14–21 provides a ligand contact to ATP; that stretch reads GPTASGKS. 16–21 contributes to the substrate binding site; the sequence is TASGKS. Interaction with substrate tRNA stretches follow at residues 39 to 42 and 163 to 167; these read DSMQ and QRIVR.

This sequence belongs to the IPP transferase family. As to quaternary structure, monomer. The cofactor is Mg(2+).

It carries out the reaction adenosine(37) in tRNA + dimethylallyl diphosphate = N(6)-dimethylallyladenosine(37) in tRNA + diphosphate. In terms of biological role, catalyzes the transfer of a dimethylallyl group onto the adenine at position 37 in tRNAs that read codons beginning with uridine, leading to the formation of N6-(dimethylallyl)adenosine (i(6)A). The sequence is that of tRNA dimethylallyltransferase from Brucella melitensis biotype 2 (strain ATCC 23457).